Here is a 1018-residue protein sequence, read N- to C-terminus: DNA polymerase gamma (1018 aa).

It belongs to the DNA polymerase type-A family. Mg(2+) serves as cofactor.

The protein resides in the mitochondrion. It catalyses the reaction DNA(n) + a 2'-deoxyribonucleoside 5'-triphosphate = DNA(n+1) + diphosphate. In terms of biological role, involved in the replication of mitochondrial DNA. This is DNA polymerase gamma (mip1) from Schizosaccharomyces pombe (strain 972 / ATCC 24843) (Fission yeast).